Here is a 540-residue protein sequence, read N- to C-terminus: Acetyl-coenzyme A carboxylase carboxyl transferase subunit beta, chloroplastic (540 aa).

The tract at residues 229–249 (YSDNGSSSIRTRTSTSSGSSY) is disordered. The segment covering 233 to 248 (GSSSIRTRTSTSSGSS) has biased composition (low complexity). The CoA carboxyltransferase N-terminal domain maps to 267–538 (LWVQCENCYA…TFHPLKSNKV (272 aa)). Zn(2+) contacts are provided by cysteine 271, cysteine 274, cysteine 290, and cysteine 293. The C4-type zinc-finger motif lies at 271 to 293 (CENCYALNYNKLFRSKMNVCEQC).

This sequence belongs to the AccD/PCCB family. In terms of assembly, acetyl-CoA carboxylase is a heterohexamer composed of biotin carboxyl carrier protein, biotin carboxylase and 2 subunits each of ACCase subunit alpha and ACCase plastid-coded subunit beta (accD). The cofactor is Zn(2+).

It is found in the plastid. It localises to the chloroplast stroma. It catalyses the reaction N(6)-carboxybiotinyl-L-lysyl-[protein] + acetyl-CoA = N(6)-biotinyl-L-lysyl-[protein] + malonyl-CoA. Its pathway is lipid metabolism; malonyl-CoA biosynthesis; malonyl-CoA from acetyl-CoA: step 1/1. Functionally, component of the acetyl coenzyme A carboxylase (ACC) complex. Biotin carboxylase (BC) catalyzes the carboxylation of biotin on its carrier protein (BCCP) and then the CO(2) group is transferred by the transcarboxylase to acetyl-CoA to form malonyl-CoA. In Amborella trichopoda, this protein is Acetyl-coenzyme A carboxylase carboxyl transferase subunit beta, chloroplastic.